The following is a 544-amino-acid chain: NADH-quinone oxidoreductase subunit C/D (544 aa).

The tract at residues 1 to 138 (MLNCDMLIDS…KGQICTETED (138 aa)) is NADH dehydrogenase I subunit C. The NADH dehydrogenase I subunit D stretch occupies residues 161–544 (MLLNVGPSHP…MNFIAGEFDR (384 aa)).

In the N-terminal section; belongs to the complex I 30 kDa subunit family. The protein in the C-terminal section; belongs to the complex I 49 kDa subunit family. As to quaternary structure, NDH-1 is composed of 13 different subunits. Subunits NuoB, CD, E, F, and G constitute the peripheral sector of the complex.

Its subcellular location is the cell inner membrane. The catalysed reaction is a quinone + NADH + 5 H(+)(in) = a quinol + NAD(+) + 4 H(+)(out). Functionally, NDH-1 shuttles electrons from NADH, via FMN and iron-sulfur (Fe-S) centers, to quinones in the respiratory chain. The immediate electron acceptor for the enzyme in this species is believed to be ubiquinone. Couples the redox reaction to proton translocation (for every two electrons transferred, four hydrogen ions are translocated across the cytoplasmic membrane), and thus conserves the redox energy in a proton gradient. The chain is NADH-quinone oxidoreductase subunit C/D from Aliarcobacter butzleri (strain RM4018) (Arcobacter butzleri).